Here is an 883-residue protein sequence, read N- to C-terminus: Bifunctional heparan sulfate N-deacetylase/N-sulfotransferase 2 (883 aa).

Residues 1 to 18 are Cytoplasmic-facing; that stretch reads MLQLWKVVRPARQLELHR. The chain crosses the membrane as a helical; Signal-anchor for type II membrane protein span at residues 19-39; that stretch reads LILLLIAFSLGSMGFLAYYVS. Over 40–883 the chain is Lumenal; sequence TSPKAKEPLP…REELQHSSLG (844 aa). The heparan sulfate N-deacetylase 2 stretch occupies residues 41 to 597; sequence SPKAKEPLPL…KRHKDIWSKE (557 aa). A disordered region spans residues 49–81; sequence PLPLGDCSSGGAAGPGPARPPVPPRPPRPPETA. The span at 65 to 78 shows a compositional bias: pro residues; the sequence is PARPPVPPRPPRPP. N-linked (GlcNAc...) asparagine glycans are attached at residues Asn-233, Asn-350, and Asn-400. The tract at residues 598–883 is heparan sulfate N-sulfotransferase 2; the sequence is KTCDRLPKFL…REELQHSSLG (286 aa). Lys-613 serves as the catalytic For sulfotransferase activity. 613–617 contributes to the 3'-phosphoadenylyl sulfate binding site; it reads KTGTT. An N-linked (GlcNAc...) asparagine glycan is attached at Asn-666. Position 711 (Ser-711) interacts with 3'-phosphoadenylyl sulfate. Asn-726 and Asn-802 each carry an N-linked (GlcNAc...) asparagine glycan. A disulfide bond links Cys-817 and Cys-827. 832-836 serves as a coordination point for 3'-phosphoadenylyl sulfate; sequence KGRRY.

The protein belongs to the sulfotransferase 1 family. NDST subfamily. In terms of assembly, monomer.

It is found in the golgi apparatus membrane. The catalysed reaction is alpha-D-glucosaminyl-[heparan sulfate](n) + 3'-phosphoadenylyl sulfate = N-sulfo-alpha-D-glucosaminyl-[heparan sulfate](n) + adenosine 3',5'-bisphosphate + 2 H(+). Its pathway is glycan metabolism; heparan sulfate biosynthesis. It functions in the pathway glycan metabolism; heparin biosynthesis. Functionally, essential bifunctional enzyme that catalyzes both the N-deacetylation and the N-sulfation of glucosamine (GlcNAc) of the glycosaminoglycan in heparan sulfate. Modifies the GlcNAc-GlcA disaccharide repeating sugar backbone to make N-sulfated heparosan, a prerequisite substrate for later modifications in heparin biosynthesis. Plays a role in determining the extent and pattern of sulfation of heparan sulfate. Required for the exosomal release of SDCBP, CD63 and syndecan. The sequence is that of Bifunctional heparan sulfate N-deacetylase/N-sulfotransferase 2 (NDST2) from Homo sapiens (Human).